Here is a 337-residue protein sequence, read N- to C-terminus: Ornithine carbamoyltransferase (337 aa).

Carbamoyl phosphate contacts are provided by residues 57–60 (STRT), Gln-84, Arg-108, and 135–138 (HPTQ). Residues Asn-167, Asp-231, and 235–236 (SM) contribute to the L-ornithine site. Residues 272–273 (CL) and Arg-317 each bind carbamoyl phosphate.

The protein belongs to the aspartate/ornithine carbamoyltransferase superfamily. OTCase family.

It is found in the cytoplasm. It carries out the reaction carbamoyl phosphate + L-ornithine = L-citrulline + phosphate + H(+). The protein operates within amino-acid degradation; L-arginine degradation via ADI pathway; carbamoyl phosphate from L-arginine: step 2/2. Its function is as follows. Reversibly catalyzes the transfer of the carbamoyl group from carbamoyl phosphate (CP) to the N(epsilon) atom of ornithine (ORN) to produce L-citrulline. This Streptococcus uberis (strain ATCC BAA-854 / 0140J) protein is Ornithine carbamoyltransferase.